Reading from the N-terminus, the 1064-residue chain is Lysine-specific demethylase 4A (1064 aa).

N-acetylalanine is present on Ala2. In terms of domain architecture, JmjN spans 14–56; that stretch reads IMTFYPTMEEFRNFSRYIAYIESQGAHRAGLAKVVPPKEWKPR. Residue Tyr132 coordinates 2-oxoglutarate. A JmjC domain is found at 142-308; that stretch reads EKHVDEWNIG…YGKQAVLCSC (167 aa). Fe cation-binding residues include His188 and Glu190. 2-oxoglutarate-binding residues include Asn198 and Lys206. Positions 234 and 240 each coordinate Zn(2+). Lys241 provides a ligand contact to 2-oxoglutarate. His276 serves as a coordination point for Fe cation. Positions 306 and 308 each coordinate Zn(2+). Disordered stretches follow at residues 358–384, 501–537, and 616–642; these read ELPP…EEGD, FSGS…RAQG, and SDDE…PLSQ. The span at 366 to 382 shows a compositional bias: acidic residues; it reads EEECPEDDMEGVEDGEE. Over residues 509–532 the composition is skewed to low complexity; the sequence is SSSLGSGSSRDSVSSDSETSEPLS. Ser523 bears the Phosphoserine mark. The segment at 597–638 is interaction with NCOR1; the sequence is RQPLSKLPRHHPLVLQECVSDDETSEQLTPEEEAEETEAWAK. A compositionally biased stretch (acidic residues) spans 616-634; it reads SDDETSEQLTPEEEAEETE. Residues 709–767 form a PHD-type 1 zinc finger; that stretch reads MCFTSTGCGTDINLSTPYLEEDGTSILVSCKKCSVRVHASCYGVPPAKASEDWMCSRCS. Residues 772–805 form a C2HC pre-PHD-type zinc finger; that stretch reads EEDCCLCSLRGGALQRANDDRWVHVSCAVAILEA. The PHD-type 2 zinc-finger motif lies at 828–885; that stretch reads LKCIFCKKRRKRTAGCCVQCSHGRCPTAFHVSCAQAAGVMMQPDDWPFVVFITCFRHK. Tudor domains follow at residues 897–954 and 955–1011; these read QSIT…CLQF and GPPA…EELP.

It belongs to the JHDM3 histone demethylase family. As to quaternary structure, interacts with histone deacetylase proteins HDAC1, HDAC2 and HDAC3. Interacts with RB and NCOR1. Interacts with VRK1. The cofactor is Fe(2+). In terms of processing, ubiquitinated by RNF8 and RNF168, leading to its degradation. Degradation promotes accessibility of H4K20me2 mark for DNA repair protein TP53BP1, which is then recruited. Also ubiquitinated by the SCF(FBXO22) complex; leading to proteasomal degradation.

The protein localises to the nucleus. The catalysed reaction is N(6),N(6),N(6)-trimethyl-L-lysyl(9)-[histone H3] + 2 2-oxoglutarate + 2 O2 = N(6)-methyl-L-lysyl(9)-[histone H3] + 2 formaldehyde + 2 succinate + 2 CO2. It carries out the reaction N(6),N(6),N(6)-trimethyl-L-lysyl(36)-[histone H3] + 2 2-oxoglutarate + 2 O2 = N(6)-methyl-L-lysyl(36)-[histone H3] + 2 formaldehyde + 2 succinate + 2 CO2. Its function is as follows. Histone demethylase that specifically demethylates 'Lys-9' and 'Lys-36' residues of histone H3, thereby playing a central role in histone code. Does not demethylate histone H3 'Lys-4', H3 'Lys-27' nor H4 'Lys-20'. Demethylates trimethylated H3 'Lys-9' and H3 'Lys-36' residue, while it has no activity on mono- and dimethylated residues. Demethylation of Lys residue generates formaldehyde and succinate. Participates in transcriptional repression of ASCL2 and E2F-responsive promoters via the recruitment of histone deacetylases and NCOR1, respectively. This is Lysine-specific demethylase 4A (KDM4A) from Pongo abelii (Sumatran orangutan).